A 507-amino-acid chain; its full sequence is Cytochrome P450 4X1 (507 aa).

Residues 14 to 34 form a helical membrane-spanning segment; the sequence is LHLALVFCLALVLMQAVKLYL. Cys452 contacts heme.

This sequence belongs to the cytochrome P450 family. Heme is required as a cofactor. In terms of tissue distribution, expressed at high levels in brain, mainly in neurons in different regions, including brain stem, hippocampus, cortex and cerebellum. Also expressed in cerebral vasculature. Not detected in kidney, nor liver.

It localises to the endoplasmic reticulum membrane. It is found in the microsome membrane. The catalysed reaction is N-(5Z,8Z,11Z,14Z-eicosatetraenoyl)-ethanolamine + reduced [NADPH--hemoprotein reductase] + O2 = N-(14,15-epoxy-5Z,8Z,11Z-eicosatrienoyl)-ethanolamine + oxidized [NADPH--hemoprotein reductase] + H2O + H(+). Functionally, a cytochrome P450 monooxygenase that selectively catalyzes the epoxidation of the last double bond of the arachidonoyl moiety of anandamide, potentially modulating endocannabinoid signaling. Has no hydroxylase activity toward various fatty acids, steroids and prostaglandins. Mechanistically, uses molecular oxygen inserting one oxygen atom into a substrate, and reducing the second into a water molecule, with two electrons provided by NADPH via cytochrome P450 reductase (CPR; NADPH-ferrihemoprotein reductase). The sequence is that of Cytochrome P450 4X1 from Rattus norvegicus (Rat).